The chain runs to 196 residues: Elongation factor Ts (196 aa).

Residues 80–83 (TDFV) form an involved in Mg(2+) ion dislocation from EF-Tu region.

This sequence belongs to the EF-Ts family.

It localises to the cytoplasm. Functionally, associates with the EF-Tu.GDP complex and induces the exchange of GDP to GTP. It remains bound to the aminoacyl-tRNA.EF-Tu.GTP complex up to the GTP hydrolysis stage on the ribosome. The sequence is that of Elongation factor Ts from Thermus thermophilus (strain ATCC BAA-163 / DSM 7039 / HB27).